The sequence spans 206 residues: Ribonuclease HII (206 aa).

The 189-residue stretch at 18-206 folds into the RNase H type-2 domain; that stretch reads GRVAGVDEVG…PVREWLEANS (189 aa). A divalent metal cation-binding residues include Asp-24, Glu-25, and Asp-116.

Belongs to the RNase HII family. Mn(2+) is required as a cofactor. Mg(2+) serves as cofactor.

The protein localises to the cytoplasm. The catalysed reaction is Endonucleolytic cleavage to 5'-phosphomonoester.. Its function is as follows. Endonuclease that specifically degrades the RNA of RNA-DNA hybrids. The protein is Ribonuclease HII of Shewanella amazonensis (strain ATCC BAA-1098 / SB2B).